A 371-amino-acid chain; its full sequence is N-acetyllactosaminide alpha-2,3-sialyltransferase (371 aa).

Gly-255 contacts CMP-N-acetyl-beta-neuraminate. The active-site Proton acceptor is Asp-258. Residues 278-282, 299-300, and 322-323 contribute to the CMP-N-acetyl-beta-neuraminate site; these read APHPR, IE, and SG. His-280 serves as the catalytic Proton donor.

This sequence belongs to the glycosyltransferase 52 family. In terms of assembly, homodimer.

It is found in the cell outer membrane. The catalysed reaction is a beta-D-galactosyl-(1-&gt;4)-N-acetyl-beta-D-glucosaminyl derivative + CMP-N-acetyl-beta-neuraminate = an N-acetyl-alpha-neuraminyl-(2-&gt;3)-beta-D-galactosyl-(1-&gt;4)-N-acetyl-beta-D-glucosaminyl derivative + CMP + H(+). The protein operates within bacterial outer membrane biogenesis; lipooligosaccharide biosynthesis. Functionally, catalyzes the transfer of sialic acid from the substrate CMP-N-acetylneuraminate to the terminal galactose residue of the lacto-N-neotetraose branch of surface lipooligosaccharide (LOS), forming an alpha-2,3-sialyl linkage. Thus, functions in the sialylation of LOS, which plays a role in the evasion of the host immune response by protecting N.meningitidis from complement-mediated serum killing and from phagocytic killing by neutrophils. This chain is N-acetyllactosaminide alpha-2,3-sialyltransferase, found in Neisseria meningitidis serogroup A / serotype 4A (strain DSM 15465 / Z2491).